The primary structure comprises 521 residues: 2-isopropylmalate synthase (521 aa).

A Pyruvate carboxyltransferase domain is found at 12-274 (VIIFDTTLRD…WNKIDTTMLT (263 aa)). Mn(2+) is bound by residues Asp-21, His-209, His-211, and Asn-245. The segment at 398 to 521 (KLLSLTVIAG…DLPVPEAAAS (124 aa)) is regulatory domain.

The protein belongs to the alpha-IPM synthase/homocitrate synthase family. LeuA type 1 subfamily. Homodimer. Mn(2+) serves as cofactor.

The protein resides in the cytoplasm. It catalyses the reaction 3-methyl-2-oxobutanoate + acetyl-CoA + H2O = (2S)-2-isopropylmalate + CoA + H(+). It functions in the pathway amino-acid biosynthesis; L-leucine biosynthesis; L-leucine from 3-methyl-2-oxobutanoate: step 1/4. In terms of biological role, catalyzes the condensation of the acetyl group of acetyl-CoA with 3-methyl-2-oxobutanoate (2-ketoisovalerate) to form 3-carboxy-3-hydroxy-4-methylpentanoate (2-isopropylmalate). This is 2-isopropylmalate synthase from Rhodopseudomonas palustris (strain BisB18).